The following is a 329-amino-acid chain: Mo25-like protein (329 aa).

Belongs to the Mo25 family.

In Schizosaccharomyces pombe (strain 972 / ATCC 24843) (Fission yeast), this protein is Mo25-like protein (pmo25).